A 151-amino-acid polypeptide reads, in one-letter code: Deoxyuridine 5'-triphosphate nucleotidohydrolase (151 aa).

Residues 70 to 72 (RSG), Asn83, 87 to 89 (LID), and Met97 contribute to the substrate site.

This sequence belongs to the dUTPase family. Requires Mg(2+) as cofactor.

The enzyme catalyses dUTP + H2O = dUMP + diphosphate + H(+). The protein operates within pyrimidine metabolism; dUMP biosynthesis; dUMP from dCTP (dUTP route): step 2/2. Its function is as follows. This enzyme is involved in nucleotide metabolism: it produces dUMP, the immediate precursor of thymidine nucleotides and it decreases the intracellular concentration of dUTP so that uracil cannot be incorporated into DNA. This Pseudomonas syringae pv. syringae (strain B728a) protein is Deoxyuridine 5'-triphosphate nucleotidohydrolase.